We begin with the raw amino-acid sequence, 126 residues long: Large-conductance mechanosensitive channel (126 aa).

Transmembrane regions (helical) follow at residues Val14 to Leu34 and Gly69 to Val89.

It belongs to the MscL family. As to quaternary structure, homopentamer.

It is found in the cell membrane. In terms of biological role, channel that opens in response to stretch forces in the membrane lipid bilayer. May participate in the regulation of osmotic pressure changes within the cell. The polypeptide is Large-conductance mechanosensitive channel (Leuconostoc citreum (strain KM20)).